Consider the following 44-residue polypeptide: Antimicrobial peptide 2 (44 aa).

Disulfide bonds. In terms of tissue distribution, expressed in flowers but not in leaves, seeds or roots (at protein level).

Its function is as follows. Antimicrobial peptide. Active against fungal species B.cinerea (IC(50)=5.2 uM), A.niger (IC(50)=2.6 uM) and B.sorokinina (IC(50)=5.2 uM) but not against F.oxysporum, F.graminearum and P.debaryanum at concentrations below 10 uM. Inhibits growth of P.infestans at concentration between 1.3 uM and 5.2 uM. Active against bacterial species P.syringae, B.subtilis, X.campestris and C.michiganense. The protein is Antimicrobial peptide 2 of Taraxacum officinale (Common dandelion).